We begin with the raw amino-acid sequence, 985 residues long: NAD kinase 2, chloroplastic (985 aa).

The transit peptide at 1–62 (MFLCFCPCHV…KRRLRFVIRA (62 aa)) directs the protein to the chloroplast. Residues 335-380 (APKAEQVELFASIVSDSSKRPIYVHSKEGVWRTSAMVSRWKQYMTR) are calmodulin-binding. 2 disordered regions span residues 389–466 (SEES…PPGN) and 548–615 (FSNG…DEAG). Composition is skewed to basic and acidic residues over residues 390-399 (EESKRREVSE) and 413-429 (VPDEQTDKVSEINEVDS). Positions 548-569 (FSNGNVHASDNTNKSISDNRGN) are enriched in polar residues.

Belongs to the NAD kinase family. Expressed in leaves.

It is found in the plastid. The protein resides in the chloroplast. The catalysed reaction is NAD(+) + ATP = ADP + NADP(+) + H(+). In terms of biological role, involved in chlorophyll synthesis and chloroplast protection against oxidative damage. The polypeptide is NAD kinase 2, chloroplastic (NADK2) (Arabidopsis thaliana (Mouse-ear cress)).